The following is an 86-amino-acid chain: uncharacterized protein (86 aa).

The first 31 residues, Met1–Ala31, serve as a signal peptide directing secretion. The disordered stretch occupies residues Pro46–Met69. Over residues Lys55 to Met69 the composition is skewed to basic and acidic residues.

This is an uncharacterized protein from Bacillus subtilis (strain 168).